Consider the following 196-residue polypeptide: 3-isopropylmalate dehydratase small subunit (196 aa).

It belongs to the LeuD family. LeuD type 1 subfamily. Heterodimer of LeuC and LeuD.

The catalysed reaction is (2R,3S)-3-isopropylmalate = (2S)-2-isopropylmalate. It participates in amino-acid biosynthesis; L-leucine biosynthesis; L-leucine from 3-methyl-2-oxobutanoate: step 2/4. In terms of biological role, catalyzes the isomerization between 2-isopropylmalate and 3-isopropylmalate, via the formation of 2-isopropylmaleate. The chain is 3-isopropylmalate dehydratase small subunit from Streptococcus thermophilus (strain CNRZ 1066).